Here is a 230-residue protein sequence, read N- to C-terminus: Ureidoacrylate amidohydrolase RutB (230 aa).

D24 (proton acceptor) is an active-site residue. Residue K133 is part of the active site. C166 functions as the Nucleophile in the catalytic mechanism.

It belongs to the isochorismatase family. RutB subfamily.

It catalyses the reaction (Z)-3-ureidoacrylate + H2O + H(+) = (Z)-3-aminoacrylate + NH4(+) + CO2. The enzyme catalyses (Z)-3-ureidoacrylate + H2O = (Z)-3-aminoacrylate + carbamate + H(+). The catalysed reaction is (Z)-2-methylureidoacrylate + H2O + H(+) = (Z)-2-methylaminoacrylate + NH4(+) + CO2. In terms of biological role, hydrolyzes ureidoacrylate to form aminoacrylate and carbamate. The carbamate hydrolyzes spontaneously, thereby releasing one of the nitrogen atoms of the pyrimidine ring as ammonia and one of its carbon atoms as CO2. This chain is Ureidoacrylate amidohydrolase RutB, found in Escherichia coli O111:H- (strain 11128 / EHEC).